The chain runs to 131 residues: uncharacterized protein (131 aa).

This is an uncharacterized protein from Archaeoglobus fulgidus (strain ATCC 49558 / DSM 4304 / JCM 9628 / NBRC 100126 / VC-16).